Here is a 933-residue protein sequence, read N- to C-terminus: Valine--tRNA ligase (933 aa).

The short motif at 58 to 68 (PNVTGSLHMGH) is the 'HIGH' region element. Residues 556 to 560 (KMSKS) carry the 'KMSKS' region motif. Lys559 is a binding site for ATP. Coiled coils occupy residues 807–833 (VTKN…ANKV) and 864–933 (EGLV…LGLK).

It belongs to the class-I aminoacyl-tRNA synthetase family. ValS type 1 subfamily. Monomer.

It localises to the cytoplasm. The enzyme catalyses tRNA(Val) + L-valine + ATP = L-valyl-tRNA(Val) + AMP + diphosphate. In terms of biological role, catalyzes the attachment of valine to tRNA(Val). As ValRS can inadvertently accommodate and process structurally similar amino acids such as threonine, to avoid such errors, it has a 'posttransfer' editing activity that hydrolyzes mischarged Thr-tRNA(Val) in a tRNA-dependent manner. The sequence is that of Valine--tRNA ligase from Prochlorococcus marinus (strain SARG / CCMP1375 / SS120).